The primary structure comprises 309 residues: Phosphoserine phosphatase (309 aa).

Asp97 (nucleophile) is an active-site residue. Residues Asp97 and Asp99 each contribute to the Mg(2+) site. Asp99 functions as the Proton donor in the catalytic mechanism. Residues Glu106, Arg142, 186 to 187 (SG), and Lys232 each bind substrate. Residue Asp255 coordinates Mg(2+). Asn258 serves as a coordination point for substrate.

The protein belongs to the HAD-like hydrolase superfamily. SerB family. Requires Mg(2+) as cofactor.

It catalyses the reaction O-phospho-L-serine + H2O = L-serine + phosphate. The catalysed reaction is O-phospho-D-serine + H2O = D-serine + phosphate. Its pathway is amino-acid biosynthesis; L-serine biosynthesis; L-serine from 3-phospho-D-glycerate: step 3/3. The polypeptide is Phosphoserine phosphatase (SER2) (Saccharomyces cerevisiae (strain ATCC 204508 / S288c) (Baker's yeast)).